The following is a 417-amino-acid chain: Serine hydroxymethyltransferase (417 aa).

(6S)-5,6,7,8-tetrahydrofolate is bound by residues L121 and 125–127 (GHL). An N6-(pyridoxal phosphate)lysine modification is found at K229. 355 to 357 (SSF) serves as a coordination point for (6S)-5,6,7,8-tetrahydrofolate.

Belongs to the SHMT family. In terms of assembly, homodimer. The cofactor is pyridoxal 5'-phosphate.

It is found in the cytoplasm. The catalysed reaction is (6R)-5,10-methylene-5,6,7,8-tetrahydrofolate + glycine + H2O = (6S)-5,6,7,8-tetrahydrofolate + L-serine. It participates in one-carbon metabolism; tetrahydrofolate interconversion. The protein operates within amino-acid biosynthesis; glycine biosynthesis; glycine from L-serine: step 1/1. Catalyzes the reversible interconversion of serine and glycine with tetrahydrofolate (THF) serving as the one-carbon carrier. This reaction serves as the major source of one-carbon groups required for the biosynthesis of purines, thymidylate, methionine, and other important biomolecules. Also exhibits THF-independent aldolase activity toward beta-hydroxyamino acids, producing glycine and aldehydes, via a retro-aldol mechanism. The sequence is that of Serine hydroxymethyltransferase from Baumannia cicadellinicola subsp. Homalodisca coagulata.